Reading from the N-terminus, the 147-residue chain is Large ribosomal subunit protein uL15 (147 aa).

Positions 1 to 20 (MTLRLNDLKPADGARTERTR) are enriched in basic and acidic residues. Residues 1–61 (MTLRLNDLKP…GFEGGQTPMQ (61 aa)) form a disordered region. A compositionally biased stretch (gly residues) spans 23–33 (RGIGSGLGKTA). The span at 34-47 (GRGHKGSFARKGGG) shows a compositional bias: basic residues.

The protein belongs to the universal ribosomal protein uL15 family. Part of the 50S ribosomal subunit.

Binds to the 23S rRNA. In Xanthomonas euvesicatoria pv. vesicatoria (strain 85-10) (Xanthomonas campestris pv. vesicatoria), this protein is Large ribosomal subunit protein uL15.